We begin with the raw amino-acid sequence, 1265 residues long: Shugoshin 2 (1265 aa).

Residues K69–N116 are a coiled coil. Disordered regions lie at residues L161–D202, D230–A287, L305–E339, and G381–D447. A compositionally biased stretch (polar residues) spans S190–D202. Basic and acidic residues predominate over residues P232–Q242. The span at L305–M322 shows a compositional bias: polar residues. Composition is skewed to basic and acidic residues over residues K389–R410 and I425–E446. Residues F452 to Q476 adopt a coiled-coil conformation. The segment at E499–L526 is disordered. Positions T503–K512 are enriched in polar residues. The stretch at E603–M626 forms a coiled coil. Residues N1073–K1083 are compositionally biased toward basic residues. The disordered stretch occupies residues N1073–H1093. S1144 is subject to Phosphoserine. Positions K1200–R1265 are disordered. The segment covering D1217–E1230 has biased composition (polar residues). The span at S1231–T1243 shows a compositional bias: basic and acidic residues.

The protein belongs to the shugoshin family. Part of an astrin (SPAG5) -kinastrin (SKAP) complex containing KNSTRN, SPAG5, PLK1, DYNLL1 and SGO2. Interacts with CDCA8. Directly interacts with PPP2CA.

The protein localises to the nucleus. The protein resides in the chromosome. It is found in the centromere. It localises to the kinetochore. Its function is as follows. Cooperates with PPP2CA to protect centromeric cohesin from separase-mediated cleavage in oocytes specifically during meiosis I. Has a crucial role in protecting REC8 at centromeres from cleavage by separase. During meiosis, protects centromeric cohesion complexes until metaphase II/anaphase II transition, preventing premature release of meiosis-specific REC8 cohesin complexes from anaphase I centromeres. Is thus essential for an accurate gametogenesis. May act by targeting PPP2CA to centromeres, thus leading to cohesin dephosphorylation. Essential for recruiting KIF2C to the inner centromere and for correcting defective kinetochore attachments. Involved in centromeric enrichment of AUKRB in prometaphase. This chain is Shugoshin 2, found in Homo sapiens (Human).